The primary structure comprises 682 residues: Potassium-transporting ATPase ATP-binding subunit (682 aa).

4 helical membrane-spanning segments follow: residues 35 to 55 (VMFI…AMAG), 62 to 82 (ATFT…ANFA), 219 to 239 (IALT…TATI), and 254 to 274 (VLVA…LSAI). Residue aspartate 307 is the 4-aspartylphosphate intermediate of the active site. ATP contacts are provided by residues aspartate 344, glutamate 348, 377–384 (FTAQTRMS), and lysine 395. 2 residues coordinate Mg(2+): aspartate 518 and aspartate 522. 3 helical membrane passes run 588–608 (FAII…LNVM), 616–636 (AILS…PLAL), and 656–676 (IYGL…DLLL).

This sequence belongs to the cation transport ATPase (P-type) (TC 3.A.3) family. Type IA subfamily. As to quaternary structure, the system is composed of three essential subunits: KdpA, KdpB and KdpC.

It localises to the cell inner membrane. It carries out the reaction K(+)(out) + ATP + H2O = K(+)(in) + ADP + phosphate + H(+). In terms of biological role, part of the high-affinity ATP-driven potassium transport (or Kdp) system, which catalyzes the hydrolysis of ATP coupled with the electrogenic transport of potassium into the cytoplasm. This subunit is responsible for energy coupling to the transport system and for the release of the potassium ions to the cytoplasm. This is Potassium-transporting ATPase ATP-binding subunit from Klebsiella pneumoniae subsp. pneumoniae (strain ATCC 700721 / MGH 78578).